The following is an 897-amino-acid chain: 3'-5' exonuclease DinG (897 aa).

The region spanning 8 to 161 (VVDLETTGNQ…DEDAATTAKL (154 aa)) is the Exonuclease domain. Positions 241-496 (SKAVDQLGLT…KAIDQLEKQR (256 aa)) constitute a Helicase ATP-binding domain. An ATP-binding site is contributed by 276 to 283 (ASLGSGKS). The DEAH box signature appears at 448 to 451 (DEAH). Positions 703–893 (NIDEYVASIV…QFGKLLRQIQ (191 aa)) constitute a Helicase C-terminal domain.

Belongs to the helicase family. DinG subfamily. Type 2 sub-subfamily.

Its function is as follows. 3'-5' exonuclease. This chain is 3'-5' exonuclease DinG, found in Staphylococcus aureus (strain USA300).